Consider the following 638-residue polypeptide: Threonine--tRNA ligase (638 aa).

The TGS domain occupies 1–61; that stretch reads MPKITLPDGT…KNDSKVVIIT (61 aa). Positions 242-533 are catalytic; the sequence is DHRKLGKKHS…LIEQYEAKFP (292 aa). Zn(2+) is bound by residues Cys333, His384, and His510.

It belongs to the class-II aminoacyl-tRNA synthetase family. As to quaternary structure, homodimer. Requires Zn(2+) as cofactor.

It is found in the cytoplasm. It catalyses the reaction tRNA(Thr) + L-threonine + ATP = L-threonyl-tRNA(Thr) + AMP + diphosphate + H(+). Functionally, catalyzes the attachment of threonine to tRNA(Thr) in a two-step reaction: L-threonine is first activated by ATP to form Thr-AMP and then transferred to the acceptor end of tRNA(Thr). Also edits incorrectly charged L-seryl-tRNA(Thr). The polypeptide is Threonine--tRNA ligase (Prochlorococcus marinus (strain MIT 9515)).